A 593-amino-acid chain; its full sequence is Monoterpene synthase 7, chloroplastic (593 aa).

A chloroplast-targeting transit peptide spans 1–39 (MSVSLSFAASATFGFRGGLGGFSRPAAAIKQWRCLPRIQ). Residues aspartate 348, aspartate 352, aspartate 491, and glutamate 499 each contribute to the Mg(2+) site. A DDXXD motif motif is present at residues 348–352 (DDVYD).

It belongs to the terpene synthase family. Tpsa subfamily. Mg(2+) is required as a cofactor. The cofactor is Mn(2+). Highly expressed in flowers, petals and sepals, but almost undetectable in vegetative organs.

The protein resides in the plastid. The protein localises to the chloroplast. It catalyses the reaction (2E)-geranyl diphosphate = sabinene + diphosphate. It carries out the reaction (2E)-geranyl diphosphate = terpinolene + diphosphate. The catalysed reaction is (2E)-geranyl diphosphate = alpha-pinene + diphosphate. The enzyme catalyses (2E)-geranyl diphosphate = beta-pinene + diphosphate. It catalyses the reaction (2E)-geranyl diphosphate = beta-myrcene + diphosphate. It carries out the reaction (2E)-geranyl diphosphate = alpha-terpinene + diphosphate. The catalysed reaction is (2E)-geranyl diphosphate = beta-phellandrene + diphosphate. The enzyme catalyses (2E)-geranyl diphosphate = gamma-terpinene + diphosphate. The protein operates within secondary metabolite biosynthesis; terpenoid biosynthesis. Its function is as follows. Monoterpene synthase involved in the biosynthesis of volatile compounds present in floral scent. Mediates the conversion of (2E)-geranyl diphosphate (GPP) into sabinene and sub-products such as alpha-thujene, alpha-pinene, beta-pinene, myrcene, alpha-phellandrene, alpha-terpinene, beta-phellandrene, gamma-terpinene and terpinolene. Unable to use farnesyl diphosphate (FPP) as substrate. The chain is Monoterpene synthase 7, chloroplastic from Hedychium coronarium (White butterfly ginger-lily).